We begin with the raw amino-acid sequence, 148 residues long: Sec-independent protein translocase protein TatB (148 aa).

A helical membrane pass occupies residues 2–22 (FNDIGPLELVTLVVLAVLVFG). 2 stretches are compositionally biased toward basic and acidic residues: residues 100–110 (VTDAVHGRESE) and 128–148 (MTKKREQLEADERPPFDADAT). The tract at residues 100-148 (VTDAVHGRESETSASSSSANGSAGGTVDMTKKREQLEADERPPFDADAT) is disordered.

This sequence belongs to the TatB family. In terms of assembly, the Tat system comprises two distinct complexes: a TatABC complex, containing multiple copies of TatA, TatB and TatC subunits, and a separate TatA complex, containing only TatA subunits. Substrates initially bind to the TatABC complex, which probably triggers association of the separate TatA complex to form the active translocon.

The protein localises to the cell membrane. Functionally, part of the twin-arginine translocation (Tat) system that transports large folded proteins containing a characteristic twin-arginine motif in their signal peptide across membranes. Together with TatC, TatB is part of a receptor directly interacting with Tat signal peptides. TatB may form an oligomeric binding site that transiently accommodates folded Tat precursor proteins before their translocation. The chain is Sec-independent protein translocase protein TatB from Streptomyces avermitilis (strain ATCC 31267 / DSM 46492 / JCM 5070 / NBRC 14893 / NCIMB 12804 / NRRL 8165 / MA-4680).